Consider the following 485-residue polypeptide: Protein disulfide isomerase-like 5-4 (485 aa).

The Thioredoxin domain maps to 114-263; the sequence is VPTGSEFHPG…LVAAMETYVA (150 aa). Cys170 (nucleophile) is an active-site residue. A helical transmembrane segment spans residues 444 to 464; sequence FSHFITNVCAIIGGVFTVAGI.

The protein belongs to the protein disulfide isomerase family.

It localises to the membrane. Its function is as follows. Acts as a protein-folding catalyst that interacts with nascent polypeptides to catalyze the formation, isomerization, and reduction or oxidation of disulfide bonds. May play a role in storage protein biogenesis. This Oryza sativa subsp. japonica (Rice) protein is Protein disulfide isomerase-like 5-4 (PDIL5-4).